We begin with the raw amino-acid sequence, 576 residues long: Arginine--tRNA ligase (576 aa).

The 'HIGH' region motif lies at 126 to 136 (ANPTGPMHIGH).

Belongs to the class-I aminoacyl-tRNA synthetase family. In terms of assembly, monomer.

The protein resides in the cytoplasm. The catalysed reaction is tRNA(Arg) + L-arginine + ATP = L-arginyl-tRNA(Arg) + AMP + diphosphate. The protein is Arginine--tRNA ligase of Rickettsia bellii (strain OSU 85-389).